The chain runs to 832 residues: Elongation factor 2 (832 aa).

In terms of domain architecture, tr-type G spans 17 to 336; sequence HNIRNMSVIA…MIVTHLPSPA (320 aa). 26-33 is a GTP binding site; sequence AHVDHGKS. Phosphothreonine is present on residues threonine 57 and threonine 59. GTP-binding positions include 152–155 and 207–209; these read NKVD and SGL. Residues 580–608 form a disordered region; that stretch reads AEPLPDGLTDDIEEGKVSPRDDPKERSNL. A compositionally biased stretch (basic and acidic residues) spans 593 to 608; that stretch reads EGKVSPRDDPKERSNL. Histidine 689 bears the Diphthamide mark.

Belongs to the TRAFAC class translation factor GTPase superfamily. Classic translation factor GTPase family. EF-G/EF-2 subfamily.

It is found in the cytoplasm. It carries out the reaction GTP + H2O = GDP + phosphate + H(+). Catalyzes the GTP-dependent ribosomal translocation step during translation elongation. During this step, the ribosome changes from the pre-translocational (PRE) to the post-translocational (POST) state as the newly formed A-site-bound peptidyl-tRNA and P-site-bound deacylated tRNA move to the P and E sites, respectively. Catalyzes the coordinated movement of the two tRNA molecules, the mRNA and conformational changes in the ribosome. The polypeptide is Elongation factor 2 (Cryptosporidium parvum).